The sequence spans 420 residues: Serine--tRNA ligase (420 aa).

229–231 (TAE) serves as a coordination point for L-serine. 260-262 (RAE) is a binding site for ATP. E283 is an L-serine binding site. Residue 347-350 (EISS) participates in ATP binding. Residue S382 participates in L-serine binding.

It belongs to the class-II aminoacyl-tRNA synthetase family. Type-1 seryl-tRNA synthetase subfamily. In terms of assembly, homodimer. The tRNA molecule binds across the dimer.

The protein localises to the cytoplasm. It carries out the reaction tRNA(Ser) + L-serine + ATP = L-seryl-tRNA(Ser) + AMP + diphosphate + H(+). The enzyme catalyses tRNA(Sec) + L-serine + ATP = L-seryl-tRNA(Sec) + AMP + diphosphate + H(+). It functions in the pathway aminoacyl-tRNA biosynthesis; selenocysteinyl-tRNA(Sec) biosynthesis; L-seryl-tRNA(Sec) from L-serine and tRNA(Sec): step 1/1. Catalyzes the attachment of serine to tRNA(Ser). Is also able to aminoacylate tRNA(Sec) with serine, to form the misacylated tRNA L-seryl-tRNA(Sec), which will be further converted into selenocysteinyl-tRNA(Sec). This Caldicellulosiruptor bescii (strain ATCC BAA-1888 / DSM 6725 / KCTC 15123 / Z-1320) (Anaerocellum thermophilum) protein is Serine--tRNA ligase.